Reading from the N-terminus, the 474-residue chain is Lipoprotein lipase (474 aa).

The N-terminal stretch at 1–27 (MESKALLLVALGVWLQSLTAFRGGVAA) is a signal peptide. Residues 32-53 (RDFSDIESKFALRTPEDTAEDT) form an interaction with GPIHBP1 region. Cys-54 and Cys-67 are joined by a disulfide. The N-linked (GlcNAc...) asparagine glycan is linked to Asn-70. The residue at position 121 (Tyr-121) is a 3'-nitrotyrosine. The active-site Nucleophile is the Ser-159. The active-site Charge relay system is the Asp-183. Tyr-191 carries the 3'-nitrotyrosine modification. Ca(2+) contacts are provided by Ala-194, Arg-197, Ser-199, and Asp-202. Cysteines 243 and 266 form a disulfide. Residues 243–266 (CNIGEAIRVIAEKGLGDVDQLVKC) are essential for determining substrate specificity. His-268 acts as the Charge relay system in catalysis. Cystine bridges form between Cys-291-Cys-310 and Cys-302-Cys-305. The 124-residue stretch at 341–464 (FHYQVKIHFS…KGKDAAVFVK (124 aa)) folds into the PLAT domain. At Tyr-343 the chain carries 3'-nitrotyrosine. Asn-386 is a glycosylation site (N-linked (GlcNAc...) asparagine). The segment at 417-421 (WSDWW) is important for interaction with lipoprotein particles. Positions 430–434 (KIRVK) are important for heparin binding. An interaction with GPIHBP1 region spans residues 443–467 (IFCAREKVSHLQKGKDAAVFVKCHD). Cys-445 and Cys-465 are oxidised to a cystine.

It belongs to the AB hydrolase superfamily. Lipase family. Homodimer. Interacts with GPIHBP1 with 1:1 stoichiometry. Interacts with APOC2; the interaction activates LPL activity in the presence of lipids. Interaction with heparan sulfate proteoglycans is required to protect LPL against loss of activity. Associates with lipoprotein particles in blood plasma. Interacts with LMF1 and SEL1L; interaction with SEL1L is required to prevent aggregation of newly synthesized LPL in the endoplasmic reticulum (ER), and for normal export of LPL from the ER to the extracellular space. Interacts with SORL1; SORL1 acts as a sorting receptor, promoting LPL localization to endosomes and later to lysosomes, leading to degradation of newly synthesized LPL. Post-translationally, tyrosine nitration after lipopolysaccharide (LPS) challenge down-regulates the lipase activity.

It localises to the cell membrane. Its subcellular location is the secreted. The protein localises to the extracellular space. It is found in the extracellular matrix. It catalyses the reaction a triacylglycerol + H2O = a diacylglycerol + a fatty acid + H(+). It carries out the reaction a 1,2-diacyl-sn-glycero-3-phosphocholine + H2O = a 2-acyl-sn-glycero-3-phosphocholine + a fatty acid + H(+). The catalysed reaction is 1,2,3-tri-(9Z-octadecenoyl)-glycerol + H2O = di-(9Z)-octadecenoylglycerol + (9Z)-octadecenoate + H(+). The enzyme catalyses 1,2-di-(9Z-octadecenoyl)-sn-glycero-3-phosphocholine + H2O = (9Z-octadecenoyl)-sn-glycero-3-phosphocholine + (9Z)-octadecenoate + H(+). It catalyses the reaction 1,2,3-tributanoylglycerol + H2O = dibutanoylglycerol + butanoate + H(+). It carries out the reaction 1,2-dihexadecanoyl-sn-glycero-3-phosphocholine + H2O = hexadecanoyl-sn-glycero-3-phosphocholine + hexadecanoate + H(+). Its activity is regulated as follows. The apolipoprotein APOC2 acts as a coactivator of LPL activity. Ca(2+) binding promotes protein stability and formation of the active homodimer. Interaction with GPIHBP1 protects LPL against inactivation by ANGPTL4. Its function is as follows. Key enzyme in triglyceride metabolism. Catalyzes the hydrolysis of triglycerides from circulating chylomicrons and very low density lipoproteins (VLDL), and thereby plays an important role in lipid clearance from the blood stream, lipid utilization and storage. Although it has both phospholipase and triglyceride lipase activities it is primarily a triglyceride lipase with low but detectable phospholipase activity. Mediates margination of triglyceride-rich lipoprotein particles in capillaries. Recruited to its site of action on the luminal surface of vascular endothelium by binding to GPIHBP1 and cell surface heparan sulfate proteoglycans. The protein is Lipoprotein lipase (Lpl) of Rattus norvegicus (Rat).